The following is a 317-amino-acid chain: Olfactory receptor 6Q1 (317 aa).

The Extracellular portion of the chain corresponds to 1–27 (MQPYTKNWTQVTEFVMMGFAGIHEAHL). N-linked (GlcNAc...) asparagine glycosylation is present at asparagine 7. Residues 28–48 (LFFILFLTMYLFTLVENLAII) traverse the membrane as a helical segment. Residues 49–56 (LVVGLDHR) are Cytoplasmic-facing. A helical transmembrane segment spans residues 57 to 77 (LRRPMYFFLTHLSCLEIWYTS). The Extracellular portion of the chain corresponds to 78–103 (VTVPKMLAGFIGVDGGKNISYADCLS). N-linked (GlcNAc...) asparagine glycosylation is present at asparagine 95. A disulfide bond links cysteine 101 and cysteine 193. The helical transmembrane segment at 104-124 (QLFIFTFLGATECFLLAAMAY) threads the bilayer. The Cytoplasmic portion of the chain corresponds to 125–143 (DRYVAICMPLHYGAFVSWG). The chain crosses the membrane as a helical span at residues 144 to 164 (TCIRLAAACWLVGFLTPILPI). Topologically, residues 165-201 (YLLSQLTFYGPNVIDHFSCDASPLLALSCSDVTWKET) are extracellular. Residues 202–221 (VDFLVSLAVLLASSMVIAVS) form a helical membrane-spanning segment. Over 222–241 (YGNIVWTLLHIRSAAERWKA) the chain is Cytoplasmic. The helical transmembrane segment at 242–262 (FSTCAAHLTVVSLFYGTLFFM) threads the bilayer. Topologically, residues 263 to 275 (YVQTKVTSSINFN) are extracellular. The helical transmembrane segment at 276–296 (KVVSVFYSVVTPMLNPLIYSL) threads the bilayer. Over 297–317 (RNKEVKGALGRVFSLNFWKGQ) the chain is Cytoplasmic.

This sequence belongs to the G-protein coupled receptor 1 family.

It is found in the cell membrane. Odorant receptor. This chain is Olfactory receptor 6Q1 (OR6Q1), found in Homo sapiens (Human).